A 1424-amino-acid chain; its full sequence is S-layer protein A (1424 aa).

A signal peptide spans 1–24 (MNKLVGLLVSSLFLASILIGIAPA). N-linked (GlcNAc...) asparagine glycosylation is found at Asn-60, Asn-70, Asn-276, Asn-295, Asn-342, Asn-358, Asn-377, Asn-468, Asn-517, Asn-545, Asn-559, Asn-581, Asn-633, Asn-714, Asn-875, Asn-914, Asn-955, Asn-989, Asn-1018, Asn-1042, Asn-1093, Asn-1134, Asn-1197, Asn-1217, Asn-1252, Asn-1276, Asn-1304, and Asn-1419.

Belongs to the Sulfolobales SlaA family. The mushroom-shaped unit cells of the Sulfolobales' S-layers may consist of three SlaB subunits and six SlaA subunits. Glycosylated. C-terminal glycosylation sites are modified with a heterogeneous family of glycans, with the largest having a composition Glc(1)Man(2)GlcNAc(2) plus 6-sulfoquinovose (QuiS).

The protein resides in the secreted. It is found in the cell wall. Its subcellular location is the S-layer. In terms of biological role, S-layer large protein. May form the highly ordered outer sheath. The polypeptide is S-layer protein A (Sulfolobus acidocaldarius (strain ATCC 33909 / DSM 639 / JCM 8929 / NBRC 15157 / NCIMB 11770)).